Here is a 731-residue protein sequence, read N- to C-terminus: Catalase-peroxidase 2 (731 aa).

Residues Met1–Ser10 show a composition bias toward polar residues. Positions Met1 to Trp26 are disordered. Residues Trp95 to Tyr218 constitute a cross-link (tryptophyl-tyrosyl-methioninium (Trp-Tyr) (with M-244)). The active-site Proton acceptor is His96. The segment at residues Tyr218–Met244 is a cross-link (tryptophyl-tyrosyl-methioninium (Tyr-Met) (with W-95)). Heme b is bound at residue His259.

Homodimer. Heme b serves as cofactor. In terms of processing, formation of the three residue Trp-Tyr-Met cross-link is important for the catalase, but not the peroxidase activity of the enzyme.

It catalyses the reaction H2O2 + AH2 = A + 2 H2O. The enzyme catalyses 2 H2O2 = O2 + 2 H2O. Functionally, bifunctional enzyme with both catalase and broad-spectrum peroxidase activity. This is Catalase-peroxidase 2 from Haloarcula marismortui (strain ATCC 43049 / DSM 3752 / JCM 8966 / VKM B-1809) (Halobacterium marismortui).